The primary structure comprises 326 residues: Sulfate/thiosulfate import ATP-binding protein CysA (326 aa).

One can recognise an ABC transporter domain in the interval 3–237; the sequence is IEVRNVSKNF…PSNDFVYHFL (235 aa). ATP is bound at residue 35–42; the sequence is GPSGCGKT.

Belongs to the ABC transporter superfamily. Sulfate/tungstate importer (TC 3.A.1.6) family. As to quaternary structure, the complex is composed of two ATP-binding proteins (CysA), two transmembrane proteins (CysT and CysW) and a solute-binding protein (CysP).

Its subcellular location is the cell inner membrane. It carries out the reaction sulfate(out) + ATP + H2O = sulfate(in) + ADP + phosphate + H(+). The catalysed reaction is thiosulfate(out) + ATP + H2O = thiosulfate(in) + ADP + phosphate + H(+). Its function is as follows. Part of the ABC transporter complex CysAWTP involved in sulfate/thiosulfate import. Responsible for energy coupling to the transport system. The sequence is that of Sulfate/thiosulfate import ATP-binding protein CysA from Pseudomonas syringae pv. tomato (strain ATCC BAA-871 / DC3000).